A 582-amino-acid polypeptide reads, in one-letter code: ATP-dependent lipid A-core flippase (582 aa).

The next 5 helical transmembrane spans lie at 16-36 (LWPH…ALVI), 69-89 (FIIL…GYCM), 153-173 (IIGL…VLVV), 250-270 (LANP…LYLA), and 275-295 (IKET…FGLL). Residues 29–310 (VAVVALVINA…LTSVTSDFQR (282 aa)) form the ABC transmembrane type-1 domain. The region spanning 342–578 (IKVDNVTFTY…DGAYAQLHRI (237 aa)) is the ABC transporter domain. Residue 376 to 383 (GRSGSGKS) coordinates ATP.

The protein belongs to the ABC transporter superfamily. Lipid exporter (TC 3.A.1.106) family. As to quaternary structure, homodimer.

It localises to the cell inner membrane. The catalysed reaction is ATP + H2O + lipid A-core oligosaccharideSide 1 = ADP + phosphate + lipid A-core oligosaccharideSide 2.. Involved in lipopolysaccharide (LPS) biosynthesis. Translocates lipid A-core from the inner to the outer leaflet of the inner membrane. Transmembrane domains (TMD) form a pore in the inner membrane and the ATP-binding domain (NBD) is responsible for energy generation. The sequence is that of ATP-dependent lipid A-core flippase from Aliivibrio fischeri (strain ATCC 700601 / ES114) (Vibrio fischeri).